Reading from the N-terminus, the 535-residue chain is Doublesex- and mab-3-related transcription factor A2 (535 aa).

The segment at residues 69–116 (CARCRNHGVVSALKGHKRYCRWKDCLCAKCTLIAERQRVMAAQVALRR) is a DNA-binding region (DM). Residues 200–315 (LQAGRPGSPQ…GGPGPRQRTP (116 aa)) are disordered. The DMA domain maps to 313 to 348 (RTPLDILTRVFPGHRRGVLELVLQGCGGDVVQAIEQ).

Belongs to the DMRT family.

Its subcellular location is the nucleus. May be involved in sexual development. This chain is Doublesex- and mab-3-related transcription factor A2 (DMRTA2), found in Bos taurus (Bovine).